A 164-amino-acid polypeptide reads, in one-letter code: Phosphopantetheine adenylyltransferase (164 aa).

S9 is a binding site for substrate. ATP contacts are provided by residues 9-10 and H17; that span reads SF. 3 residues coordinate substrate: K41, V78, and R92. ATP contacts are provided by residues 93–95, E103, and 128–134; these read GLR and SRPITAT.

The protein belongs to the bacterial CoaD family. Homohexamer. The cofactor is Mg(2+).

Its subcellular location is the cytoplasm. It catalyses the reaction (R)-4'-phosphopantetheine + ATP + H(+) = 3'-dephospho-CoA + diphosphate. The protein operates within cofactor biosynthesis; coenzyme A biosynthesis; CoA from (R)-pantothenate: step 4/5. Reversibly transfers an adenylyl group from ATP to 4'-phosphopantetheine, yielding dephospho-CoA (dPCoA) and pyrophosphate. This chain is Phosphopantetheine adenylyltransferase, found in Rhizobium leguminosarum bv. trifolii (strain WSM2304).